The following is a 258-amino-acid chain: Protein IMPACT homolog (258 aa).

Residues 10-114 (EELEAVEAIY…TELDGVLYVE (105 aa)) form the RWD domain. A Glycyl lysine isopeptide (Lys-Gly) (interchain with G-Cter in ubiquitin) cross-link involves residue Lys187.

This sequence belongs to the IMPACT family. Interacts (via N-terminus) with GCN1 (via C-terminus); this interaction reduces the GCN1-GCN20 complex formation and prevents the interaction of GCN1 with GCN2 protein kinase and GCN2 activation in amino acid-starved cells. Interacts (via C-terminus) with ACT1; this interaction occurs in a GCN1-independent manner. Interacts with RPL39; this interaction occurs in a GCN1-independent manner. Associates (via middle region) with ribosomes; this association occurs in a GCN1-independent manner and persists under amino acid starvation conditions.

It localises to the cytoplasm. Its subcellular location is the nucleus. In terms of biological role, translational regulator that ensures constant high levels of translation under amino acid starvation. Plays a role as a negative regulator of the GCN2 kinase activity; impairs GCN1-mediated GCN2 activation, and hence GCN2-mediated eIF-2-alpha phosphorylation in amino acid-starved cells and subsequent down-regulation of protein synthesis. In normal conditions, it resides in a actin complex and has no activity. The chain is Protein IMPACT homolog (YIH1) from Saccharomyces cerevisiae (strain ATCC 204508 / S288c) (Baker's yeast).